A 740-amino-acid chain; its full sequence is Ion-translocating oxidoreductase complex subunit C (740 aa).

4Fe-4S ferredoxin-type domains lie at 369–397 (GEPQEEQSCIRCSACADACPADLLPQQLY) and 407–436 (KATTHNIADCIECGACAWVCPSNIPLVQYF). Cys377, Cys380, Cys383, Cys387, Cys416, Cys419, Cys422, and Cys426 together coordinate [4Fe-4S] cluster. A disordered region spans residues 602–718 (KLEQQQANAE…EEQVDPRKAA (117 aa)).

The protein belongs to the 4Fe4S bacterial-type ferredoxin family. RnfC subfamily. The complex is composed of six subunits: RsxA, RsxB, RsxC, RsxD, RsxE and RsxG. [4Fe-4S] cluster serves as cofactor.

It localises to the cell inner membrane. Functionally, part of a membrane-bound complex that couples electron transfer with translocation of ions across the membrane. Required to maintain the reduced state of SoxR. This chain is Ion-translocating oxidoreductase complex subunit C, found in Shigella sonnei (strain Ss046).